Reading from the N-terminus, the 103-residue chain is Small ribosomal subunit protein uS10 (103 aa).

The protein belongs to the universal ribosomal protein uS10 family. Part of the 30S ribosomal subunit.

Functionally, involved in the binding of tRNA to the ribosomes. This is Small ribosomal subunit protein uS10 from Shewanella pealeana (strain ATCC 700345 / ANG-SQ1).